Reading from the N-terminus, the 745-residue chain is Polyribonucleotide nucleotidyltransferase (745 aa).

Asp-487 and Asp-493 together coordinate Mg(2+). Positions 554–613 (PRIETMQIPTDKIRDVIGTGGKIIREIVEKTGAKINIEDTGIVKIASSDGKAIKAAYNWI) constitute a KH domain. The S1 motif domain maps to 623 to 691 (GTIYDGTIVK…ERGKIRLSMK (69 aa)). The disordered stretch occupies residues 695–745 (QETGEDLTEKLKAERAERGEPEREERSDRGDRGDRGPRRDRGERRRESSGE). Positions 701–745 (LTEKLKAERAERGEPEREERSDRGDRGDRGPRRDRGERRRESSGE) are enriched in basic and acidic residues.

Belongs to the polyribonucleotide nucleotidyltransferase family. The cofactor is Mg(2+).

It is found in the cytoplasm. The catalysed reaction is RNA(n+1) + phosphate = RNA(n) + a ribonucleoside 5'-diphosphate. In terms of biological role, involved in mRNA degradation. Catalyzes the phosphorolysis of single-stranded polyribonucleotides processively in the 3'- to 5'-direction. In Methylorubrum extorquens (strain CM4 / NCIMB 13688) (Methylobacterium extorquens), this protein is Polyribonucleotide nucleotidyltransferase.